Reading from the N-terminus, the 2602-residue chain is Filamin-B (2602 aa).

An actin-binding region spans residues 1 to 239; it reads MPVTEKDLAE…VMTYLSQFPK (239 aa). Calponin-homology (CH) domains lie at 16–122 and 139–242; these read KIQQ…LHYS and QTPK…KAKL. Position 216 is a phosphothreonine (T216). The interval 244–267 is disordered; the sequence is PGAPLKPKLNPKKARAYGRGIEPT. Filamin repeat units lie at residues 249–347, 349–446, 447–543, 544–636, 640–736, 737–839, 840–938, 939–1034, 1035–1127, 1128–1222, 1223–1322, 1323–1415, 1416–1511, 1512–1608, and 1609–1704; these read KPKL…EVNV, KAQG…GVQI, GEAC…EVQV, GPEA…MAFI, TGDY…RVNI, GQGS…RVKV, DPSH…TVGV, AAPL…TVEA, SLPP…KADI, EMPF…WVKV, EPAI…KVAV, TEGC…RVPS, KDVV…KVKV, LPTY…RIRA, and TQTG…TVMA. T519 bears the Phosphothreonine mark. At K681 the chain carries N6-acetyllysine. S730 is modified (phosphoserine). Residues 837–850 show a composition bias toward basic and acidic residues; that stretch reads VKVDPSHDASKVKA. The disordered stretch occupies residues 837 to 862; the sequence is VKVDPSHDASKVKAEGPGLSKAGVEN. 4 positions are modified to phosphoserine: S886, S932, S983, and S1028. T1307 carries the post-translational modification Phosphothreonine. Position 1316 is a phosphoserine (S1316). S1433, S1505, and S1602 each carry phosphoserine. Residues 1705–1728 form a hinge 1 region; that stretch reads TDGEVTAMEEAPVNACPPGFRPWV. Filamin repeat units follow at residues 1729–1813, 1816–1908, 1919–1994, 1997–2089, 2091–2185, 2188–2280, 2282–2375, and 2379–2471; these read TEEA…SPLQ, VNYP…TAKI, KLGS…SIMV, SEIG…TVKI, GEGR…QFTV, LGEG…LVPV, APSD…KVRV, and GQAG…KAKV. At K1780 the chain carries N6-acetyllysine. Residues S2083 and S2113 each carry the phosphoserine modification. Phosphoserine occurs at positions 2369 and 2465. K2468 participates in a covalent cross-link: Glycyl lysine isopeptide (Lys-Gly) (interchain with G-Cter in ISG15). Residues 2472 to 2506 are hinge 2; sequence TGQRLVSPGSANETSSILVESVTRSSTETCYSAIP. The tract at residues 2472-2602 is self-association site, tail; sequence TGQRLVSPGS…PGSPFHVTVP (131 aa). A phosphoserine mark is found at S2478, S2481, and S2492. Residues 2507-2601 form a Filamin 24 repeat; that stretch reads KSSSDASKVT…IPGSPFHVTV (95 aa). N6-succinyllysine is present on residues K2518 and K2524. K2576 bears the N6-acetyllysine mark.

This sequence belongs to the filamin family. Homodimer. Interacts with FLNA, FLNC, INPPL1, ITGB1A, ITGB1D, ITGB3, ITGB6, MYOT, MYOZ1, PSEN1 and PSEN2. Interacts with MICALL2. Interacts with RFLNA and RFLNB. Interacts with ASB2 isoform 1; the interaction targets FLNB for proteasomal degradation. ISGylation prevents ability to interact with the upstream activators of the JNK cascade and inhibits IFNA-induced JNK signaling. In terms of processing, ubiquitination by a SCF-like complex containing ASB2 isoform 1 leads to proteasomal degradation which promotes muscle differentiation. Expressed in hippocampus, cortex, cerebellar Purkinje cells and granule cell layers.

It is found in the cytoplasm. The protein resides in the cell cortex. Its subcellular location is the cytoskeleton. It localises to the stress fiber. The protein localises to the myofibril. It is found in the sarcomere. The protein resides in the z line. Its function is as follows. Connects cell membrane constituents to the actin cytoskeleton. May promote orthogonal branching of actin filaments and links actin filaments to membrane glycoproteins. Anchors various transmembrane proteins to the actin cytoskeleton. This chain is Filamin-B (Flnb), found in Mus musculus (Mouse).